The sequence spans 2178 residues: Streptococcal hemagglutinin (2178 aa).

The signal sequence occupies residues 1–90 (MFFKRQKGQY…AVVTSSSVYA (90 aa)). Positions 91–137 (EEEQALEKVIDTRDVLATRGEAVLSEEAATTLSSEGANPVESLSDTL) are non-repeat region 1 (NR1). The segment at 138 to 219 (SASESASANS…SLISSDSSNS (82 aa)) is ser-rich region 1 (SR1). The span at 192–244 (TSQSFSSTTSSTQSSNNESLISSDSSNSLNTNQSVSARNQNARVRTRRAVAAN) shows a compositional bias: low complexity. Disordered regions lie at residues 192–246 (TSQS…ANDT), 495–557 (VSAS…SVSA), 584–653 (SAST…SVSA), 836–857 (SAST…SVSA), 884–917 (SAST…SVSA), 944–993 (SAST…SESA), 1020–1289 (SASV…SVSA), 1341–1390 (ASTS…ESAS), 1488–1685 (SASV…SVSA), 1725–1901 (ASTS…SAST), and 2119–2151 (LSQS…GESE). Residues 220–449 (LNTNQSVSAR…ANRVVKDLQI (230 aa)) are non-repeat region 2 (NR2). The ser-rich region 2 (SR2) stretch occupies residues 450 to 2143 (SKSNSASQSS…SMHDRISKGQ (1694 aa)). A compositionally biased stretch (low complexity) spans 2119–2130 (LSQSLSDSQSTS). An LPXTG sorting signal motif is present at residues 2144–2148 (LPRTG). T2147 is modified (pentaglycyl murein peptidoglycan amidated threonine). A propeptide spans 2148–2178 (GESESKASILALGIGALGLAFKKRKKNESED) (removed by sortase).

The protein belongs to the serine-rich repeat protein (SRRP) family. The protein is glycosylated in vivo; constructs without SR1 and SR2 are not glycosylated.

It is found in the secreted. The protein resides in the cell wall. Functionally, a cell wall protein involved with PadA in host cell interactions required for colonization and pathogensis. Mediates hemagglutination and adherence to ghst glycoproteins. Recognizes fetuin-A (AHSG), a highly glycosylated human plasma protein, also involved in recognition of human platelets, probably via platelet glycoprotein Ib alpha (GP1BA). Acts in concert with PadA to promote binding to glycosylated human fibronectin (FN1) and vitronectin (VTN), and biofilm formation. Plays a major role in fibronectin and vitronectin binding; binding is mediated by glycosylated regions. Probably mediates interaction of PadA with resting platelets. This is Streptococcal hemagglutinin from Streptococcus gordonii (strain Challis / ATCC 35105 / BCRC 15272 / CH1 / DL1 / V288).